A 253-amino-acid polypeptide reads, in one-letter code: Zinc finger protein JAGGED (253 aa).

The interval 1-46 (MRHEENYLDLNNLPDDFSKDGNKQALEEGSSSGQRKKKGSKEGKDE) is disordered. The segment covering 16-26 (DFSKDGNKQAL) has biased composition (basic and acidic residues). The C2H2-type zinc finger occupies 51–73 (YECRFCSLKFCKSQALGGHMNRH).

In terms of assembly, interacts with GATA18/HAN. In terms of tissue distribution, expressed in the emerging leaf, sepal, petal, stamen and carpel primordia. Not expressed in the apical shoot meristem (SAM).

The protein resides in the nucleus. Controls the morphogenesis of lateral organs. Functions in lateral organ shape and is sufficient to induce proliferation and growth of lateral organ tissue. Is necessary and sufficient for bract formation, but its expression is excluded from the cryptic bract, which could be a cause of bractless flowers in Arabidopsis. Participates with FIL and YAB3 in regulating valve margin development. Functions with JGL to define stamen and carpel shape. Functions with AS1 and AS2 in the sepal and petal primordia to repress boundary-specifying genes for normal development of the organs. This chain is Zinc finger protein JAGGED (JAG), found in Arabidopsis thaliana (Mouse-ear cress).